We begin with the raw amino-acid sequence, 247 residues long: Leucyl/phenylalanyl-tRNA--protein transferase (247 aa).

This sequence belongs to the L/F-transferase family.

The protein resides in the cytoplasm. The enzyme catalyses N-terminal L-lysyl-[protein] + L-leucyl-tRNA(Leu) = N-terminal L-leucyl-L-lysyl-[protein] + tRNA(Leu) + H(+). The catalysed reaction is N-terminal L-arginyl-[protein] + L-leucyl-tRNA(Leu) = N-terminal L-leucyl-L-arginyl-[protein] + tRNA(Leu) + H(+). It carries out the reaction L-phenylalanyl-tRNA(Phe) + an N-terminal L-alpha-aminoacyl-[protein] = an N-terminal L-phenylalanyl-L-alpha-aminoacyl-[protein] + tRNA(Phe). Functionally, functions in the N-end rule pathway of protein degradation where it conjugates Leu, Phe and, less efficiently, Met from aminoacyl-tRNAs to the N-termini of proteins containing an N-terminal arginine or lysine. The polypeptide is Leucyl/phenylalanyl-tRNA--protein transferase (Solidesulfovibrio magneticus (strain ATCC 700980 / DSM 13731 / RS-1) (Desulfovibrio magneticus)).